We begin with the raw amino-acid sequence, 199 residues long: FMN-dependent NADH:quinone oxidoreductase 2 (199 aa).

FMN-binding positions include Ser10, 16-18 (SVS), and 96-99 (MYNF).

The protein belongs to the azoreductase type 1 family. As to quaternary structure, homodimer. It depends on FMN as a cofactor.

It carries out the reaction 2 a quinone + NADH + H(+) = 2 a 1,4-benzosemiquinone + NAD(+). The enzyme catalyses N,N-dimethyl-1,4-phenylenediamine + anthranilate + 2 NAD(+) = 2-(4-dimethylaminophenyl)diazenylbenzoate + 2 NADH + 2 H(+). Its function is as follows. Quinone reductase that provides resistance to thiol-specific stress caused by electrophilic quinones. In terms of biological role, also exhibits azoreductase activity. Catalyzes the reductive cleavage of the azo bond in aromatic azo compounds to the corresponding amines. This is FMN-dependent NADH:quinone oxidoreductase 2 from Pseudomonas putida (strain ATCC 47054 / DSM 6125 / CFBP 8728 / NCIMB 11950 / KT2440).